Consider the following 95-residue polypeptide: Probable dolichol-phosphate mannosyltransferase subunit 3 (95 aa).

The next 2 membrane-spanning stretches (helical) occupy residues 10 to 30 (AHVI…VPVL) and 44 to 64 (APFF…VYGV).

This sequence belongs to the DPM3 family.

It localises to the endoplasmic reticulum membrane. It functions in the pathway protein modification; protein glycosylation. Its function is as follows. Stabilizer subunit of the dolichol-phosphate-mannose synthase complex. The sequence is that of Probable dolichol-phosphate mannosyltransferase subunit 3 (dpm-3) from Caenorhabditis elegans.